The following is a 256-amino-acid chain: uncharacterized protein (256 aa).

To B.subtilis LplA.

This is an uncharacterized protein from Niallia circulans (Bacillus circulans).